A 289-amino-acid chain; its full sequence is Pteridine reductase 1 (289 aa).

Gly-14–Ser-41 contributes to the NADP(+) binding site. Residue Ser-176 participates in substrate binding. Tyr-195 (proton acceptor) is an active-site residue. Tyr-195 to Lys-199 contacts NADP(+).

It belongs to the short-chain dehydrogenases/reductases (SDR) family. In terms of assembly, homotetramer.

The enzyme catalyses (6R)-L-erythro-5,6,7,8-tetrahydrobiopterin + 2 NADP(+) = L-erythro-biopterin + 2 NADPH + 2 H(+). It functions in the pathway cofactor biosynthesis; tetrahydrobiopterin biosynthesis; tetrahydrobiopterin from biopterin: step 1/1. Its function is as follows. Exhibits a NADPH-dependent biopterin reductase activity. Has good activity with folate and significant activity with dihydrofolate and dihydrobiopterin, but not with quinonoid dihydrobiopterin. Confers resistance to methotrexate (MTX). This is Pteridine reductase 1 (PTR1) from Leishmania tarentolae (Sauroleishmania tarentolae).